Here is a 140-residue protein sequence, read N- to C-terminus: Large ribosomal subunit protein uL13 (140 aa).

Belongs to the universal ribosomal protein uL13 family. Part of the 50S ribosomal subunit.

Functionally, this protein is one of the early assembly proteins of the 50S ribosomal subunit, although it is not seen to bind rRNA by itself. It is important during the early stages of 50S assembly. The polypeptide is Large ribosomal subunit protein uL13 (Methanosarcina barkeri (strain Fusaro / DSM 804)).